A 366-amino-acid polypeptide reads, in one-letter code: METVTVNLVSTPAQRGYPIHIGANILTQPELILDYLDQKRVAIVTNTTVGPLYLEKFRADLSVHGMVSVPIVLPDGEEYKNWETLNLIFDALLTHRCERNTPLIALGGGVVGDLTGFAAATYLRGVPFIQVPTTLLAQVDSSVGGKTGINHPLGKNMIGAFYQPQAVVADTSTLDTLPDRELRAGIAEVIKYGLIRDPAFFDWIESHIELLLRRDNSILTDAIKRSCQHKAEVVEEDERESGMRALLNLGHTFGHAIENAMGYGNWLHGEAVAAGTMLAAEVSRRMGMIGEEDVDRVRNLYVKTGLPVIAPNLGPEKYLHLMGLDKKVQGGKMRFILLENIGRATVHADVPAAILTEVLTECTADA.

Residues 75 to 80 (DGEEYK), 109 to 113 (GVVGD), 133 to 134 (TT), Lys-146, Lys-155, and 173 to 176 (TLDT) contribute to the NAD(+) site. Zn(2+)-binding residues include Glu-188, His-251, and His-268.

Belongs to the sugar phosphate cyclases superfamily. Dehydroquinate synthase family. Co(2+) is required as a cofactor. The cofactor is Zn(2+). NAD(+) serves as cofactor.

The protein resides in the cytoplasm. It catalyses the reaction 7-phospho-2-dehydro-3-deoxy-D-arabino-heptonate = 3-dehydroquinate + phosphate. The protein operates within metabolic intermediate biosynthesis; chorismate biosynthesis; chorismate from D-erythrose 4-phosphate and phosphoenolpyruvate: step 2/7. Its function is as follows. Catalyzes the conversion of 3-deoxy-D-arabino-heptulosonate 7-phosphate (DAHP) to dehydroquinate (DHQ). The protein is 3-dehydroquinate synthase of Nitrosospira multiformis (strain ATCC 25196 / NCIMB 11849 / C 71).